A 178-amino-acid polypeptide reads, in one-letter code: Large ribosomal subunit protein uL6 (178 aa).

This sequence belongs to the universal ribosomal protein uL6 family. Part of the 50S ribosomal subunit.

Functionally, this protein binds to the 23S rRNA, and is important in its secondary structure. It is located near the subunit interface in the base of the L7/L12 stalk, and near the tRNA binding site of the peptidyltransferase center. The polypeptide is Large ribosomal subunit protein uL6 (Halobacterium salinarum (strain ATCC 700922 / JCM 11081 / NRC-1) (Halobacterium halobium)).